Reading from the N-terminus, the 276-residue chain is MKILKRIPVLAVLLVGLMTNCSNDSDSSSLSVANSTYETTALNSQKSSTDQPNSGSKSGQTLDLVNLGVAANFAILSKTGITDVYKSAITGDVGASPITGAAILLKCDEVTGTIFSVDAAGPACKITDASRLTTAVGDMQIAYDNAAGRLNPDFLNLGAGTIGGKTLTPGLYKWTSTLNIPTDITISGSSTDVWIFQVAGNLNMSSAVRITLAGGAQAKNIFWQTAGAVTLGSTSHFEGNILSQTGINMKTAASINGRMMAQTAVTLQMNTVTIPQ.

The signal sequence occupies residues 1-24 (MKILKRIPVLAVLLVGLMTNCSND). The Ice-binding site motif (T-A/G-X-T/N) 1 signature appears at 79 to 82 (TGIT). A disulfide bridge links cysteine 107 with cysteine 124. Short sequence motifs (ice-binding site motif (T-A/G-X-T/N)) lie at residues 245-248 (TGIN) and 263-266 (TAVT).

This sequence belongs to the ice-binding protein family. Monomer.

It localises to the secreted. In terms of biological role, has antifreeze activity for survival in a subzero environment. Binds to the surface of ice crystals and inhibits their growth. Has high thermal hysteresis (TH) activity, which is the ability to lower the freezing point of an aqueous solution below its melting point, and thus the freezing of the cell fluid can be prevented protecting the organism from ice damage. The TH activity of this protein is 2.2 degrees Celsius at 5 uM and 2.5 degrees Celsius at 50 uM. This chain is Ice-binding protein, found in Flavobacterium frigoris (strain PS1).